Consider the following 256-residue polypeptide: Nuclear shuttle protein (256 aa).

The short motif at 21–42 is the Bipartite nuclear localization signal element; the sequence is HSTGKRSRNVSRIDFKRRSSKY. The short motif at 81–96 is the Nuclear localization signal element; it reads SLGKTEPSRSRSYIKL. Residues 150–187 form an interaction with Arabidopsis thaliana NSI protein region; that stretch reads ELFGARIHSHGNLAVSSALKDRFYIRHVFKRVISVEKD.

It belongs to the begomovirus nuclear shuttle protein family. Binds to single-stranded and double-stranded viral DNA. Interacts with the host nuclear shuttle interacting (NSI) protein. This interaction may allow NSP to recruit NSI monomers to the viral genome and thus regulate nuclear export of viral genome by NSP.

Its subcellular location is the host nucleus. The protein localises to the host cytoplasm. The protein resides in the host cell membrane. In terms of biological role, binds to the genomic viral ssDNA, shuttles it into and out of the cell nucleus. Begomoviruses use 2 proteins to transport their DNA from cell to cell. The nuclear shuttle protein (NSP) shuttles it between nucleus and cytoplasm and the movement protein (MP) probably transports the DNA-NSP complex to the cell periphery and facilitates movement across the cell wall. In Solanum lycopersicum (Tomato), this protein is Nuclear shuttle protein.